A 1327-amino-acid polypeptide reads, in one-letter code: ABC transporter 1 (1327 aa).

The next 6 membrane-spanning stretches (helical) occupy residues 47-67 (LGILAAIASGVPFPLMGIIFG), 100-120 (VYVGIAYFVLVYIYIASWNLF), 170-190 (KVGIVLNSVSFFITAYIIAFV), 195-215 (LGGELVSLTPAYLLMSLVGGY), 228-248 (VAGASSVAMEALSNATIVHAF), and 276-296 (VAVQSGLLYFIAFSANGLAFW). The region spanning 47-326 (LGILAAIASG…TTYTVIFLLV (280 aa)) is the ABC transmembrane type-1 1 domain. N-linked (GlcNAc...) asparagine glycans are attached at residues Asn-381, Asn-390, and Asn-406. The region spanning 386–663 (IELNNVSFAF…DGAYAGLVRL (278 aa)) is the ABC transporter 1 domain. 421 to 428 (GLSGSGKS) contacts ATP. Asn-463 and Asn-674 each carry an N-linked (GlcNAc...) asparagine glycan. A run of 6 helical transmembrane segments spans residues 743–763 (FLALTSAFVVGGTYSASAVVF), 785–805 (FYGLMFFILAIIEFFANLGSW), 859–881 (LTGSVVGTIIAILVNLVVAIALS), 888–910 (IALVCLAVVPLMLGAGVMRVITM), 971–991 (LWLAISYGVSNFLYALAYWWG), and 1005–1025 (FFIVLMALLVSAQLWGQMFTL). Positions 743–1031 (FLALTSAFVV…MFTLAPDVSR (289 aa)) constitute an ABC transmembrane type-1 2 domain. Asn-1050 carries N-linked (GlcNAc...) asparagine glycosylation. A disordered region spans residues 1054-1081 (PCQHLKPGNDLEANAEPREKRPDQSQGG). Residues 1084–1323 (VSLNNVKFSY…SESYKINALH (240 aa)) enclose the ABC transporter 2 domain. 1119–1126 (GPSGAGKS) is a binding site for ATP.

Belongs to the ABC transporter superfamily. ABCB family. Multidrug resistance exporter (TC 3.A.1.201) subfamily.

The protein localises to the membrane. Its function is as follows. ABC transporter; part of the gene cluster that mediates the biosynthesis of hydroxamate-containing siderophores that play a critical role in virulence via intracellular iron acquisition during macrophage infection. Probably involved in the excretion of the extracellular siderophores. The sequence is that of ABC transporter 1 from Ajellomyces capsulatus (Darling's disease fungus).